A 1298-amino-acid chain; its full sequence is Histone-lysine N-methyltransferase EHMT1 (1298 aa).

2 disordered regions span residues 1–111 (MAAA…HVTA) and 144–192 (ASSL…RKLP). Residue alanine 2 is modified to N-acetylalanine. A Glycyl lysine isopeptide (Lys-Gly) (interchain with G-Cter in SUMO1); alternate cross-link involves residue lysine 22. Lysine 22 is covalently cross-linked (Glycyl lysine isopeptide (Lys-Gly) (interchain with G-Cter in SUMO2); alternate). The segment covering 38–50 (SAEKQAGEAHMAA) has biased composition (basic and acidic residues). Polar residues-rich tracts occupy residues 54–67 (TNGS…SSHA) and 76–89 (SARV…NTLT). Residues 96–105 (VSERDSEAAK) show a composition bias toward basic and acidic residues. Glycyl lysine isopeptide (Lys-Gly) (interchain with G-Cter in SUMO2) cross-links involve residues lysine 190, lysine 199, lysine 231, lysine 234, lysine 317, and lysine 327. Residues 211-234 (VVGLHAASKDPREVREARDHKEPK) are disordered. A compositionally biased stretch (basic and acidic residues) spans 217–234 (ASKDPREVREARDHKEPK). The segment at 339–479 (VNGESLEMDS…QTAPGDSTGY (141 aa)) is disordered. Positions 344 to 360 (LEMDSDEDDSEELEEDD) are enriched in acidic residues. Residues 373–393 (EDSRTSKESMSEADRAQKMDG) are compositionally biased toward basic and acidic residues. Residues 394–416 (ESEEEQESVDTGEEEEGGDESDL) are compositionally biased toward acidic residues. Residue lysine 432 forms a Glycyl lysine isopeptide (Lys-Gly) (interchain with G-Cter in SUMO2) linkage. The residue at position 435 (serine 435) is a Phosphoserine. A compositionally biased stretch (basic residues) spans 440 to 452 (PARKRRRRSRKKP). A compositionally biased stretch (polar residues) spans 460–474 (SYKSSAGSAEQTAPG). Serine 483 is modified (phosphoserine). Residues lysine 492, lysine 559, lysine 644, lysine 659, lysine 684, and lysine 731 each participate in a glycyl lysine isopeptide (Lys-Gly) (interchain with G-Cter in SUMO2) cross-link. Positions 644–717 (KADTTSTVTP…TPGLSQGPGK (74 aa)) are disordered. ANK repeat units lie at residues 737 to 766 (FHPK…DPNF), 772 to 801 (NKRS…NIDT), 805 to 834 (DQRT…LVDP), 838 to 868 (EGST…DVNC), 872 to 901 (GGWT…DINI), 905 to 934 (EENI…DLHA), 938 to 967 (HGDS…DVTL), and 971 to 1004 (EGET…DRPS). A histone H3K9me binding region spans residues 905–907 (EEN). 2 positions are modified to phosphoserine: serine 1004 and serine 1048. The region spanning 1060–1123 (QYCVCIDDCS…NCRNRVVQNG (64 aa)) is the Pre-SET domain. The Zn(2+) site is built by cysteine 1062, cysteine 1064, cysteine 1068, cysteine 1073, cysteine 1075, cysteine 1105, cysteine 1109, cysteine 1111, and cysteine 1115. Residues 1126-1243 (ARLQLYRTRD…AGEQLGFDYG (118 aa)) form the SET domain. S-adenosyl-L-methionine is bound by residues 1136–1138 (MGW), tyrosine 1173, and 1200–1201 (NH). Residues 1162-1181 (DSEADVREEDSYLFDLDNKD) are interaction with histone H3. A Zn(2+)-binding site is contributed by cysteine 1203. The tract at residues 1242-1245 (YGER) is interaction with histone H3. Zn(2+) is bound at residue cysteine 1256. Arginine 1257 contributes to the S-adenosyl-L-methionine binding site. Cysteine 1258 and cysteine 1263 together coordinate Zn(2+). Residues 1274–1298 (QASAAQEAQEDGLPDTSSAAAADPL) form a disordered region.

This sequence belongs to the class V-like SAM-binding methyltransferase superfamily. In terms of assembly, heterodimer; heterodimerizes with EHMT2. Interacts with WIZ and EHMT2. Part of the E2F6.com-1 complex in G0 phase composed of E2F6, MGA, MAX, TFDP1, CBX3, BAT8, EHMT1, RING1, RNF2, MBLR, L3MBTL2 and YAF2. Interacts (via ANK repeats) with RELA (when monomethylated at 'Lys-310'). Interacts with MPHOSPH8. Interacts with CDYL. Interacts with REST only in the presence of CDYL. Part of a complex containing at least CDYL, REST, WIZ, SETB1, EHMT1 and EHMT2. Interacts with BAZ2B. In terms of tissue distribution, widely expressed.

It is found in the nucleus. Its subcellular location is the chromosome. It catalyses the reaction N(6)-methyl-L-lysyl(9)-[histone H3] + S-adenosyl-L-methionine = N(6),N(6)-dimethyl-L-lysyl(9)-[histone H3] + S-adenosyl-L-homocysteine + H(+). The catalysed reaction is L-lysyl(9)-[histone H3] + S-adenosyl-L-methionine = N(6)-methyl-L-lysyl(9)-[histone H3] + S-adenosyl-L-homocysteine + H(+). Methyltransferase activity is inhibited by BIX-01294. Efficiently inhibited by compound E72, a BIX-01294 derivative in which the diazepane ring and the benzyl are replaced with a 3-dimethylaminopropyl and a 5-aminopentyl group at sites B and C, respectively. In terms of biological role, histone methyltransferase that specifically mono- and dimethylates 'Lys-9' of histone H3 (H3K9me1 and H3K9me2, respectively) in euchromatin. H3K9me represents a specific tag for epigenetic transcriptional repression by recruiting HP1 proteins to methylated histones. Also weakly methylates 'Lys-27' of histone H3 (H3K27me). Also required for DNA methylation, the histone methyltransferase activity is not required for DNA methylation, suggesting that these 2 activities function independently. Probably targeted to histone H3 by different DNA-binding proteins like E2F6, MGA, MAX and/or DP1. During G0 phase, it probably contributes to silencing of MYC- and E2F-responsive genes, suggesting a role in G0/G1 transition in cell cycle. In addition to the histone methyltransferase activity, also methylates non-histone proteins: mediates dimethylation of 'Lys-373' of p53/TP53. Represses the expression of mitochondrial function-related genes, perhaps by occupying their promoter regions, working in concert with probable chromatin reader BAZ2B. This Homo sapiens (Human) protein is Histone-lysine N-methyltransferase EHMT1 (EHMT1).